An 838-amino-acid chain; its full sequence is Calmodulin-binding transcription activator 6 (838 aa).

The segment at residues 25 to 134 (VQTMLEEAKS…YRDTQEAATT (110 aa)) is a DNA-binding region (CG-1). The stretch at 525 to 554 (QGWTALHWAAYYGREKMVAALLSAGARPNL) is one ANK repeat. IQ domains follow at residues 671 to 700 (SIIA…IQCR), 713 to 742 (MRRQ…SVGV), and 788 to 817 (LERS…THEE). The calmodulin-binding stretch occupies residues 738–760 (WSVGVLEKAVLRWRQKRKGFRGL). A coiled-coil region spans residues 802–822 (KKAQQDYRRMKLTHEEAQVNH).

It belongs to the CAMTA family. Expressed in roots, stems, leaves, sepals, petals, stamen filaments, top of carpels, anthers and siliques, but not in stigmas.

Its subcellular location is the nucleus. Transcription activator that binds calmodulin in a calcium-dependent manner in vitro. Binds to the DNA consensus sequence 5'-[ACG]CGCG[GTC]-3'. Regulates transcriptional activity in response to calcium signals. The polypeptide is Calmodulin-binding transcription activator 6 (Arabidopsis thaliana (Mouse-ear cress)).